The chain runs to 151 residues: D-aminoacyl-tRNA deacylase (151 aa).

The Gly-cisPro motif, important for rejection of L-amino acids motif lies at 138–139 (GP).

The protein belongs to the DTD family. In terms of assembly, homodimer.

It localises to the cytoplasm. The enzyme catalyses glycyl-tRNA(Ala) + H2O = tRNA(Ala) + glycine + H(+). It carries out the reaction a D-aminoacyl-tRNA + H2O = a tRNA + a D-alpha-amino acid + H(+). Its function is as follows. An aminoacyl-tRNA editing enzyme that deacylates mischarged D-aminoacyl-tRNAs. Also deacylates mischarged glycyl-tRNA(Ala), protecting cells against glycine mischarging by AlaRS. Acts via tRNA-based rather than protein-based catalysis; rejects L-amino acids rather than detecting D-amino acids in the active site. By recycling D-aminoacyl-tRNA to D-amino acids and free tRNA molecules, this enzyme counteracts the toxicity associated with the formation of D-aminoacyl-tRNA entities in vivo and helps enforce protein L-homochirality. The chain is D-aminoacyl-tRNA deacylase from Magnetococcus marinus (strain ATCC BAA-1437 / JCM 17883 / MC-1).